Here is a 91-residue protein sequence, read N- to C-terminus: Small ribosomal subunit protein bS20 (91 aa).

The protein belongs to the bacterial ribosomal protein bS20 family.

Functionally, binds directly to 16S ribosomal RNA. The sequence is that of Small ribosomal subunit protein bS20 from Thermosipho melanesiensis (strain DSM 12029 / CIP 104789 / BI429).